Here is a 59-residue protein sequence, read N- to C-terminus: Large ribosomal subunit protein bL32 (59 aa).

Positions Met-1–Arg-16 are enriched in basic residues. The interval Met-1–Asp-20 is disordered.

Belongs to the bacterial ribosomal protein bL32 family.

This is Large ribosomal subunit protein bL32 from Novosphingobium aromaticivorans (strain ATCC 700278 / DSM 12444 / CCUG 56034 / CIP 105152 / NBRC 16084 / F199).